Reading from the N-terminus, the 61-residue chain is uncharacterized protein (61 aa).

This is an uncharacterized protein from Frog virus 3 (isolate Goorha) (FV-3).